The chain runs to 340 residues: Ferrochelatase (340 aa).

Positions 202 and 283 each coordinate Fe cation.

It belongs to the ferrochelatase family.

Its subcellular location is the cytoplasm. It carries out the reaction heme b + 2 H(+) = protoporphyrin IX + Fe(2+). It participates in porphyrin-containing compound metabolism; protoheme biosynthesis; protoheme from protoporphyrin-IX: step 1/1. Functionally, catalyzes the ferrous insertion into protoporphyrin IX. This Acinetobacter baylyi (strain ATCC 33305 / BD413 / ADP1) protein is Ferrochelatase.